The chain runs to 376 residues: Inactive CLIP domain-containing serine protease A28 (376 aa).

Residues 1–19 form the signal peptide; sequence MKVLLFCIVISLTTLIASG. The region spanning 24–80 is the Clip domain; sequence EELRCPGGYCVSKYLCPNGTFIDDIKHAQTTQLIGLRAGLDIDDFDDCNDYLLVCCQ. Cystine bridges form between Cys-28–Cys-78, Cys-33–Cys-71, and Cys-39–Cys-79. The N-linked (GlcNAc...) asparagine glycan is linked to Asn-41. The tract at residues 85-106 is disordered; the sequence is PTATSTEKPATSDELIEPPPST. In terms of domain architecture, Peptidase S1 spans 114–364; the sequence is NEGGLIYDLR…YVQWLNEHIV (251 aa). N-linked (GlcNAc...) asparagine glycans are attached at residues Asn-125 and Asn-279. Disulfide bonds link Cys-251–Cys-321, Cys-280–Cys-301, and Cys-311–Cys-340. N-linked (GlcNAc...) asparagine glycosylation is present at Asn-369.

The protein belongs to the peptidase S1 family. CLIP subfamily. As to quaternary structure, may form a heterodimer of a light chain and a heavy chain; disulfide-linked. In terms of processing, secreted as a full-length protein. Proteolytically cleaved into two chains which probably remain covalently linked. Cleavage is induced by fungus B.bassiana and Gram-positive or Gram-negative bacteria infection.

The protein localises to the secreted. Inactive serine protease which plays an essential role in the innate immune response against bacteria, fungi and protozoa infection by activating the melanization cascade. In the melanization cascade, acts downstream of TEP1, SPCLIP1 and CLIPA8 to promote CLIPC9 proteolytic cleavage. In the susceptible strain G3, appears to be dispensable for parasite P.berghei ookinete elimination which occurs by lysis. Required for the melanization of Gram-positive and Gram-negative bacteria. Required for the melanization of fungus B.bassiana. This Anopheles gambiae (African malaria mosquito) protein is Inactive CLIP domain-containing serine protease A28.